Reading from the N-terminus, the 524-residue chain is Coatomer subunit delta-1 (524 aa).

The interval 215-244 (MDMDSFASKPKGGRPSAAATAPGKGLGMKL) is disordered. In terms of domain architecture, MHD spans 283 to 524 (SDPVTVTIEE…RLVAANYQVV (242 aa)).

The protein belongs to the adaptor complexes medium subunit family. Delta-COP subfamily. Oligomeric complex that consists of at least the alpha, beta, beta', gamma, delta, epsilon and zeta subunits.

Its subcellular location is the cytoplasm. It localises to the golgi apparatus membrane. It is found in the cytoplasmic vesicle. The protein resides in the COPI-coated vesicle membrane. Functionally, the coatomer is a cytosolic protein complex that binds to dilysine motifs and reversibly associates with Golgi non-clathrin-coated vesicles, which further mediate biosynthetic protein transport from the ER, via the Golgi up to the trans Golgi network. Coatomer complex is required for budding from Golgi membranes, and is essential for the retrograde Golgi-to-ER transport of dilysine-tagged proteins. The protein is Coatomer subunit delta-1 of Oryza sativa subsp. japonica (Rice).